A 166-amino-acid polypeptide reads, in one-letter code: NADPH-dependent 7-cyano-7-deazaguanine reductase (166 aa).

Cysteine 57 functions as the Thioimide intermediate in the catalytic mechanism. The active-site Proton donor is the aspartate 64. Residues 79 to 81 (VES) and 98 to 99 (HE) each bind substrate.

It belongs to the GTP cyclohydrolase I family. QueF type 1 subfamily.

Its subcellular location is the cytoplasm. It catalyses the reaction 7-aminomethyl-7-carbaguanine + 2 NADP(+) = 7-cyano-7-deazaguanine + 2 NADPH + 3 H(+). It functions in the pathway tRNA modification; tRNA-queuosine biosynthesis. In terms of biological role, catalyzes the NADPH-dependent reduction of 7-cyano-7-deazaguanine (preQ0) to 7-aminomethyl-7-deazaguanine (preQ1). This chain is NADPH-dependent 7-cyano-7-deazaguanine reductase, found in Staphylococcus epidermidis (strain ATCC 35984 / DSM 28319 / BCRC 17069 / CCUG 31568 / BM 3577 / RP62A).